Here is a 329-residue protein sequence, read N- to C-terminus: IDS-like terpene synthase 1 (329 aa).

The Mg(2+) site is built by D79 and D83.

The protein belongs to the FPP/GGPP synthase family. Mg(2+) is required as a cofactor.

It catalyses the reaction (2E)-geranyl diphosphate + H2O = linalool + diphosphate. It carries out the reaction (2E,6E)-farnesyl diphosphate + H2O = (6E)-nerolidol + diphosphate. Its function is as follows. Terpene synthase that shows monoterpene synthase activity and produces linalool, using geranyl diphosphate (GPP) as substrate. Also shows sesquiterpene synthase activity as it is able to convert farnesyl diphosphate (FPP) into (E)-nerolidol. This Melampsora lini (Rust fungus) protein is IDS-like terpene synthase 1.